Consider the following 298-residue polypeptide: ATP synthase gamma chain (298 aa).

It belongs to the ATPase gamma chain family. F-type ATPases have 2 components, CF(1) - the catalytic core - and CF(0) - the membrane proton channel. CF(1) has five subunits: alpha(3), beta(3), gamma(1), delta(1), epsilon(1). CF(0) has three main subunits: a, b and c.

The protein resides in the cell inner membrane. Functionally, produces ATP from ADP in the presence of a proton gradient across the membrane. The gamma chain is believed to be important in regulating ATPase activity and the flow of protons through the CF(0) complex. In Desulfosudis oleivorans (strain DSM 6200 / JCM 39069 / Hxd3) (Desulfococcus oleovorans), this protein is ATP synthase gamma chain.